The primary structure comprises 409 residues: Peptidase T (409 aa).

His-78 provides a ligand contact to Zn(2+). Residue Asp-80 is part of the active site. Asp-141 is a Zn(2+) binding site. Glu-175 functions as the Proton acceptor in the catalytic mechanism. Residues Glu-176, Asp-198, and His-380 each coordinate Zn(2+).

It belongs to the peptidase M20B family. Zn(2+) serves as cofactor.

The protein resides in the cytoplasm. The catalysed reaction is Release of the N-terminal residue from a tripeptide.. In terms of biological role, cleaves the N-terminal amino acid of tripeptides. The protein is Peptidase T of Caldanaerobacter subterraneus subsp. tengcongensis (strain DSM 15242 / JCM 11007 / NBRC 100824 / MB4) (Thermoanaerobacter tengcongensis).